We begin with the raw amino-acid sequence, 343 residues long: 4-hydroxy-2-oxovalerate aldolase 2 (343 aa).

A Pyruvate carboxyltransferase domain is found at 5–255 (ITIVDTTLRD…DTGVDLFPLI (251 aa)). Substrate-binding positions include 13–14 (RD), Ser-167, and His-194. Asp-14 contributes to the Mn(2+) binding site. Positions 194 and 196 each coordinate Mn(2+). Tyr-285 is a binding site for substrate.

The protein belongs to the 4-hydroxy-2-oxovalerate aldolase family.

It carries out the reaction (S)-4-hydroxy-2-oxopentanoate = acetaldehyde + pyruvate. The polypeptide is 4-hydroxy-2-oxovalerate aldolase 2 (Rhodococcus jostii (strain RHA1)).